The chain runs to 322 residues: Probable manganese-dependent inorganic pyrophosphatase (322 aa).

His10, Asp14, Asp16, Asp86, His108, and Asp160 together coordinate Mn(2+).

It belongs to the PPase class C family. Mn(2+) is required as a cofactor.

It localises to the cytoplasm. It catalyses the reaction diphosphate + H2O = 2 phosphate + H(+). The polypeptide is Probable manganese-dependent inorganic pyrophosphatase (ppaC) (Archaeoglobus fulgidus (strain ATCC 49558 / DSM 4304 / JCM 9628 / NBRC 100126 / VC-16)).